Reading from the N-terminus, the 353-residue chain is uncharacterized protein (353 aa).

The segment at I69–S106 is disordered. A compositionally biased stretch (low complexity) spans S70–R86. A coiled-coil region spans residues G319–G353.

This is an uncharacterized protein from Gibberella zeae (strain ATCC MYA-4620 / CBS 123657 / FGSC 9075 / NRRL 31084 / PH-1) (Wheat head blight fungus).